The sequence spans 324 residues: UDP-N-acetylenolpyruvoylglucosamine reductase (324 aa).

The 182-residue stretch at 36–217 folds into the FAD-binding PCMH-type domain; the sequence is FRAGGLAELM…IRAEMDAVRA (182 aa). Residue Arg-183 is part of the active site. Ser-232 acts as the Proton donor in catalysis. Glu-302 is an active-site residue.

The protein belongs to the MurB family. Requires FAD as cofactor.

The protein resides in the cytoplasm. It catalyses the reaction UDP-N-acetyl-alpha-D-muramate + NADP(+) = UDP-N-acetyl-3-O-(1-carboxyvinyl)-alpha-D-glucosamine + NADPH + H(+). Its pathway is cell wall biogenesis; peptidoglycan biosynthesis. Functionally, cell wall formation. In Rhizobium rhizogenes (strain K84 / ATCC BAA-868) (Agrobacterium radiobacter), this protein is UDP-N-acetylenolpyruvoylglucosamine reductase.